The chain runs to 227 residues: Cytochrome c oxidase subunit 2 (227 aa).

Topologically, residues 1–14 (MAYPFQLGLQDATS) are mitochondrial intermembrane. Residues 15–45 (PIMEELMNFHDHTLMIVFLISSLVLYIISLM) traverse the membrane as a helical segment. Residues 46–59 (LTTKLTHTSTMDAQ) lie on the Mitochondrial matrix side of the membrane. The chain crosses the membrane as a helical span at residues 60-87 (EVETIWTILPAVILILIALPSLRILYMM). At 88–227 (DEINNPVLTV…NFENWSTSMI (140 aa)) the chain is on the mitochondrial intermembrane side. Cu cation is bound by residues His-161, Cys-196, Glu-198, Cys-200, His-204, and Met-207. Residue Glu-198 participates in Mg(2+) binding.

It belongs to the cytochrome c oxidase subunit 2 family. In terms of assembly, component of the cytochrome c oxidase (complex IV, CIV), a multisubunit enzyme composed of 14 subunits. The complex is composed of a catalytic core of 3 subunits MT-CO1, MT-CO2 and MT-CO3, encoded in the mitochondrial DNA, and 11 supernumerary subunits COX4I, COX5A, COX5B, COX6A, COX6B, COX6C, COX7A, COX7B, COX7C, COX8 and NDUFA4, which are encoded in the nuclear genome. The complex exists as a monomer or a dimer and forms supercomplexes (SCs) in the inner mitochondrial membrane with NADH-ubiquinone oxidoreductase (complex I, CI) and ubiquinol-cytochrome c oxidoreductase (cytochrome b-c1 complex, complex III, CIII), resulting in different assemblies (supercomplex SCI(1)III(2)IV(1) and megacomplex MCI(2)III(2)IV(2)). Found in a complex with TMEM177, COA6, COX18, COX20, SCO1 and SCO2. Interacts with TMEM177 in a COX20-dependent manner. Interacts with COX20. Interacts with COX16. Cu cation is required as a cofactor.

The protein resides in the mitochondrion inner membrane. It carries out the reaction 4 Fe(II)-[cytochrome c] + O2 + 8 H(+)(in) = 4 Fe(III)-[cytochrome c] + 2 H2O + 4 H(+)(out). Its function is as follows. Component of the cytochrome c oxidase, the last enzyme in the mitochondrial electron transport chain which drives oxidative phosphorylation. The respiratory chain contains 3 multisubunit complexes succinate dehydrogenase (complex II, CII), ubiquinol-cytochrome c oxidoreductase (cytochrome b-c1 complex, complex III, CIII) and cytochrome c oxidase (complex IV, CIV), that cooperate to transfer electrons derived from NADH and succinate to molecular oxygen, creating an electrochemical gradient over the inner membrane that drives transmembrane transport and the ATP synthase. Cytochrome c oxidase is the component of the respiratory chain that catalyzes the reduction of oxygen to water. Electrons originating from reduced cytochrome c in the intermembrane space (IMS) are transferred via the dinuclear copper A center (CU(A)) of subunit 2 and heme A of subunit 1 to the active site in subunit 1, a binuclear center (BNC) formed by heme A3 and copper B (CU(B)). The BNC reduces molecular oxygen to 2 water molecules using 4 electrons from cytochrome c in the IMS and 4 protons from the mitochondrial matrix. The chain is Cytochrome c oxidase subunit 2 (MT-CO2) from Apodemus mystacinus (Broad-toothed field mouse).